The primary structure comprises 93 residues: N-acetyl-S-hydroxy-L-cysteine reductase (93 aa).

Residues 1–93 enclose the Glutaredoxin domain; it reads MSDVVNIVVW…NHAQIKEAKR (93 aa). The cysteines at positions 15 and 18 are disulfide-linked.

Belongs to the glutaredoxin family.

It carries out the reaction N-acetyl-S-hydroxy-L-cysteine + AH2 = N-acetyl-L-cysteine + A + H2O. The protein operates within amino-acid metabolism. Functionally, involved in a cysteine salvage pathway from S-alkylcysteine. Catalyzes the reduction of N-acetyl-S-hydroxy-L-cysteine (N-acetyl-L-cysteine sulfenic acid) to N-acetyl-L-cysteine. This pathway is likely important in the catabolism of alkylated cysteine generated by proteolysis of alkylated glutathione formed in the detoxification of a wide range of electrophiles. The chain is N-acetyl-S-hydroxy-L-cysteine reductase from Bacillus subtilis (strain 168).